A 235-amino-acid polypeptide reads, in one-letter code: Chalcone--flavanone isomerase 2 (235 aa).

Positions 50 and 192 each coordinate substrate.

Belongs to the chalcone isomerase family.

The catalysed reaction is a chalcone = a flavanone.. Its pathway is secondary metabolite biosynthesis; flavonoid biosynthesis. Catalyzes the intramolecular cyclization of bicyclic chalcones into tricyclic (S)-flavanones. Responsible for the isomerization of 4,2',4',6'-tetrahydroxychalcone (also termed chalcone) into naringenin. The chain is Chalcone--flavanone isomerase 2 (CHI2) from Chrysanthemum morifolium (Florist's daisy).